A 239-amino-acid chain; its full sequence is Ribonuclease P protein component 3 (239 aa).

This sequence belongs to the eukaryotic/archaeal RNase P protein component 3 family. In terms of assembly, consists of a catalytic RNA component and at least 4-5 protein subunits.

The protein resides in the cytoplasm. It carries out the reaction Endonucleolytic cleavage of RNA, removing 5'-extranucleotides from tRNA precursor.. Functionally, part of ribonuclease P, a protein complex that generates mature tRNA molecules by cleaving their 5'-ends. The chain is Ribonuclease P protein component 3 from Methanosarcina mazei (strain ATCC BAA-159 / DSM 3647 / Goe1 / Go1 / JCM 11833 / OCM 88) (Methanosarcina frisia).